Consider the following 147-residue polypeptide: MAGNSILLAAVSILSACQQSYFALQVGKARLKYKVTPPAVTGSPEFERVFRAQQNCVEFYPIFIITLWMAGWYFNQVFATCLGLVYIYGRHLYFWGYSEAAKKRITGFRLSLGILALLTLLGALGIANSFLDEYLDLNIAKKLRRQF.

3 consecutive transmembrane segments (helical) span residues 6 to 26 (ILLAAVSILSACQQSYFALQV), 59 to 79 (FYPIFIITLWMAGWYFNQVFA), and 111 to 131 (SLGILALLTLLGALGIANSFL).

It belongs to the MAPEG family. Homotrimer. Liver, spleen, skeletal muscle, heart, adrenals, pancreas, prostate, testis, fetal liver, and fetal spleen. Very low expression in lung, brain, placenta and bone marrow. Abundantly expressed in human umbilical vein endothelial cells (at protein level).

It localises to the endoplasmic reticulum membrane. The protein resides in the microsome membrane. The enzyme catalyses RX + glutathione = an S-substituted glutathione + a halide anion + H(+). It catalyses the reaction 1-chloro-2,4-dinitrobenzene + glutathione = 2,4-dinitrophenyl-S-glutathione + chloride + H(+). It carries out the reaction leukotriene C4 = leukotriene A4 + glutathione. The catalysed reaction is (5S)-hydroperoxy-(6E,8Z,11Z,14Z)-eicosatetraenoate + 2 glutathione = (5S)-hydroxy-(6E,8Z,11Z,14Z)-eicosatetraenoate + glutathione disulfide + H2O. Each monomer can bind on GSH molecule but only one subunit is catalytically active. Catalyzes several different glutathione-dependent reactions. Catalyzes the glutathione-dependent reduction of lipid hydroperoxides, such as 5-HPETE. Has glutathione transferase activity, toward xenobiotic electrophiles, such as 1-chloro-2, 4-dinitrobenzene (CDNB). Also catalyzes the conjugation of leukotriene A4 with reduced glutathione to form leukotriene C4 (LTC4). Involved in oxidative DNA damage induced by ER stress and anticancer agents by activating LTC4 biosynthetic machinery in nonimmune cells. In Homo sapiens (Human), this protein is Microsomal glutathione S-transferase 2 (MGST2).